The sequence spans 433 residues: Trigger factor (433 aa).

A PPIase FKBP-type domain is found at 163-248 (GDTVNIDFSG…VNEIKFKEVP (86 aa)).

The protein belongs to the FKBP-type PPIase family. Tig subfamily.

Its subcellular location is the cytoplasm. The enzyme catalyses [protein]-peptidylproline (omega=180) = [protein]-peptidylproline (omega=0). Its function is as follows. Involved in protein export. Acts as a chaperone by maintaining the newly synthesized protein in an open conformation. Functions as a peptidyl-prolyl cis-trans isomerase. This Staphylococcus aureus (strain Newman) protein is Trigger factor.